A 484-amino-acid polypeptide reads, in one-letter code: MSLEDKFDSLSVSQGASDHINNQLLEKYSHKIKTDELSFSRAKTSKDKANRATVENVLDPRTMRFLKSMVTRGVIADLNGCLSTGKEANVYHAFAGTGKAPVIDEETGQYEVLETDGSRAEYAIKIYKTSILVFKDRERYVDGEFRFRNSRSQHNPRKMIKIWAEKEFRNLKRIYQSGVIPAPKPIEVKNNVLVMEFLSRGNGFASPKLKDYPYKNRDEIFHYYHTMVAYMRLLYQVCRLVHADLSEYNTIVHDDKLYMIDVSQSVEPEHPMSLDFLRMDIKNVNLYFEKMGISIFPERVIFQFVISETLEKFKGDYNNISALVAYIASNLPIKSTEQDEAEDEIFRSLHLVRSLGGLEERDFDRYTDGKFDLLKSLIAHDNERNFAASEQFEFDNADHECSSGTEEFSDDEEDGSSGSEEDDEEEGEYYDDDEPKVLKGKKHEDKDLKKLRKQEAKDAKREKRKTKVKKHIKKKLVKKTKSKK.

The Protein kinase domain occupies 76 to 402; the sequence is ADLNGCLSTG…EFDNADHECS (327 aa). Positions 125 and 198 each coordinate ATP. The Proton acceptor role is filled by aspartate 244. Residues asparagine 249 and aspartate 261 each contribute to the Mg(2+) site. The active-site 4-aspartylphosphate intermediate is aspartate 261. Positions 398 to 484 are disordered; the sequence is DHECSSGTEE…KLVKKTKSKK (87 aa). A phosphoserine; by CK2 mark is found at serine 402, serine 403, serine 409, serine 416, serine 417, and serine 419. The interaction with CKA2 stretch occupies residues 403 to 484; the sequence is SGTEEFSDDE…KLVKKTKSKK (82 aa). The span at 407 to 434 shows a compositional bias: acidic residues; the sequence is EFSDDEEDGSSGSEEDDEEEGEYYDDDE. The interval 440-484 is association with (pre-)40S ribosomal subunit; it reads GKKHEDKDLKKLRKQEAKDAKREKRKTKVKKHIKKKLVKKTKSKK. Basic and acidic residues predominate over residues 442–461; that stretch reads KHEDKDLKKLRKQEAKDAKR. A compositionally biased stretch (basic residues) spans 462-484; it reads EKRKTKVKKHIKKKLVKKTKSKK.

The protein belongs to the protein kinase superfamily. RIO-type Ser/Thr kinase family. In terms of assembly, interacts with CKA2. The cofactor is Mg(2+). In terms of processing, autophosphorylated. Phosphorylated by casein kinase II (CK2). Phosphorylation by CK2 stimulates RIO1 kinase activity and targets it for degradation at the G1/S transition of the cell cycle.

It is found in the cytoplasm. The catalysed reaction is L-seryl-[protein] + ATP = O-phospho-L-seryl-[protein] + ADP + H(+). The enzyme catalyses L-threonyl-[protein] + ATP = O-phospho-L-threonyl-[protein] + ADP + H(+). It carries out the reaction ATP + H2O = ADP + phosphate + H(+). Its function is as follows. Required for the final endonucleolytic cleavage at site D converting 20S pre-rRNA into the mature 18S rRNA. Required for the final steps of cytoplasmic maturation of the 40S ribosomal subunit. The association with the very late 40S subunit intermediate seems to follow RIO2 association with precursors of the 40S subunit and may involve a translation-like checkpoint point cycle preceeding the binding to the 60S ribosomal subunit. Despite the protein kinase domain is proposed to act predominantly as an ATPase. The catalytic activity regulates its dynamic association with the 40S subunit. Has a role in the cell cycle where it is required for entrance into S-phase and in the control of the onset of anaphase. Appears to also be involved in the maintenance of chromosome stability and correct mitotic segregation. The sequence is that of Serine/threonine-protein kinase RIO1 (RIO1) from Saccharomyces cerevisiae (strain ATCC 204508 / S288c) (Baker's yeast).